The chain runs to 113 residues: Putative anti-sigma factor antagonist TM_1081 (113 aa).

The region spanning 1-110 (MFPYKIVDDV…DTISEAMEEV (110 aa)) is the STAS domain. The residue at position 55 (S55) is a Phosphoserine.

Belongs to the anti-sigma-factor antagonist family. Post-translationally, phosphorylated on a serine residue.

In terms of biological role, in the phosphorylated form it could act as an anti-anti-sigma factor that counteracts an anti-sigma factor and thus releases a sigma factor from inhibition. The sequence is that of Putative anti-sigma factor antagonist TM_1081 from Thermotoga maritima (strain ATCC 43589 / DSM 3109 / JCM 10099 / NBRC 100826 / MSB8).